The chain runs to 65 residues: Conotoxin Cal1.5 (65 aa).

Residues 1 to 18 (MRCLPVFIILLLLASTAA) form the signal peptide. A propeptide spanning residues 19 to 49 (VDVAGSKLKRRLERKPYQGSQAYVKKTAFGL) is cleaved from the precursor. Cystine bridges form between C52/C62 and C53/C59. P61 is modified (4-hydroxyproline).

Belongs to the conotoxin T superfamily. As to expression, expressed by the venom duct.

It is found in the secreted. Functionally, probable neurotoxin with unknown target. Possibly targets ion channels. The protein is Conotoxin Cal1.5 of Californiconus californicus (California cone).